A 1325-amino-acid chain; its full sequence is Zinc finger MYM-type protein 6 (1325 aa).

8 MYM-type zinc fingers span residues 113–151, 163–206, 213–248, 296–334, 342–443, 451–485, 492–531, and 538–572; these read QLFC…PKDV, KDFC…RFEV, HGLC…SSGP, ELFC…QYHL, YSFC…KPEL, FLFC…KETV, KPFC…LVEN, and EEFC…SESI. At Ser397 the chain carries Phosphoserine. Positions 665-733 are disordered; that stretch reads ESTQEDAMKF…NDAELDSPPS (69 aa). A compositionally biased stretch (polar residues) spans 695–706; that stretch reads PVTQTKATSCKP.

In terms of tissue distribution, expressed at high levels in heart, skeletal muscle, kidney and liver.

It localises to the nucleus. Plays a role in the regulation of cell morphology and cytoskeletal organization. In Homo sapiens (Human), this protein is Zinc finger MYM-type protein 6 (ZMYM6).